Here is a 473-residue protein sequence, read N- to C-terminus: M-phase inducer phosphatase 3 (473 aa).

The tract at residues Met-1–Ser-23 is disordered. An N-acetylserine modification is found at Ser-2. Residues Ser-20 and Ser-38 each carry the phosphoserine modification. Thr-48 carries the phosphothreonine modification. A phosphoserine mark is found at Ser-57, Ser-61, and Ser-64. Thr-67 bears the Phosphothreonine mark. Phosphoserine; by CDK1 is present on Ser-122. Ser-129 is modified (phosphoserine). Thr-130 carries the post-translational modification Phosphothreonine. Residues Asn-132–Leu-158 form a disordered region. Residues Cys-145 to Leu-158 show a composition bias toward polar residues. Ser-168 carries the phosphoserine modification. Phosphoserine; by PLK3 occurs at positions 191 and 198. Position 214 is a phosphoserine; by CDK1 (Ser-214). Position 216 is a phosphoserine; by CHEK1, CHEK2, BRSK1, MAPK14 AND MARK3 (Ser-216). The Rhodanese domain maps to Leu-321–Glu-428. Residues Tyr-334–Phe-379 form an HIV-1 Vpr binding site region. Cys-377 is an active-site residue. Ser-472 carries the post-translational modification Phosphoserine.

Belongs to the MPI phosphatase family. In terms of assembly, interacts with MAPK14 and 14-3-3 proteins. When phosphorylated on Ser-129 and/or Thr-130, interacts with PLK1. Interacts with MARK3/C-TAK1. As to quaternary structure, (Microbial infection) Interacts with HIV-1 Vpr; this interaction inactivates CDC25C phosphatase activity. In terms of processing, phosphorylated by CHEK1 and MAPK14 at Ser-216. This phosphorylation creates a binding site for 14-3-3 protein and inhibits the phosphatase. Phosphorylated by PLK4. Phosphorylated by PLK1, leading to activate the phosphatase activity. Phosphorylation by PLK3 at Ser-191 promotes nuclear translocation. Ser-198 is a minor phosphorylation site. Was initially reported to be phosphorylated by PLK3 at Ser-216. However, such phosphorylation by PLK3 was not confirmed by other groups. Phosphorylation at Thr-48, Thr-67, Ser-122, Thr-130, Ser-168 and Ser-214 occurs at G2 and G2-M transition and is probably catalyzed by CDK1. Ser-168 phosphorylation levels are lower than those at the other 5 CDK1 sites. Phosphorylation by CDK1 leads to increased activity.

The protein resides in the nucleus. It carries out the reaction O-phospho-L-tyrosyl-[protein] + H2O = L-tyrosyl-[protein] + phosphate. In terms of biological role, functions as a dosage-dependent inducer in mitotic control. Tyrosine protein phosphatase required for progression of the cell cycle. When phosphorylated, highly effective in activating G2 cells into prophase. Directly dephosphorylates CDK1 and activates its kinase activity. The chain is M-phase inducer phosphatase 3 (CDC25C) from Homo sapiens (Human).